Consider the following 181-residue polypeptide: ATP synthase subunit delta (181 aa).

Belongs to the ATPase delta chain family. In terms of assembly, F-type ATPases have 2 components, F(1) - the catalytic core - and F(0) - the membrane proton channel. F(1) has five subunits: alpha(3), beta(3), gamma(1), delta(1), epsilon(1). F(0) has three main subunits: a(1), b(2) and c(10-14). The alpha and beta chains form an alternating ring which encloses part of the gamma chain. F(1) is attached to F(0) by a central stalk formed by the gamma and epsilon chains, while a peripheral stalk is formed by the delta and b chains.

It is found in the cell inner membrane. Its function is as follows. F(1)F(0) ATP synthase produces ATP from ADP in the presence of a proton or sodium gradient. F-type ATPases consist of two structural domains, F(1) containing the extramembraneous catalytic core and F(0) containing the membrane proton channel, linked together by a central stalk and a peripheral stalk. During catalysis, ATP synthesis in the catalytic domain of F(1) is coupled via a rotary mechanism of the central stalk subunits to proton translocation. This protein is part of the stalk that links CF(0) to CF(1). It either transmits conformational changes from CF(0) to CF(1) or is implicated in proton conduction. The protein is ATP synthase subunit delta of Chlorobium phaeovibrioides (strain DSM 265 / 1930) (Prosthecochloris vibrioformis (strain DSM 265)).